The sequence spans 346 residues: Methylthioribose-1-phosphate isomerase (346 aa).

Substrate is bound by residues 46–48 (RGA), arginine 89, and glutamine 196. Catalysis depends on aspartate 237, which acts as the Proton donor. 247–248 (NK) serves as a coordination point for substrate.

This sequence belongs to the eIF-2B alpha/beta/delta subunits family. MtnA subfamily.

The catalysed reaction is 5-(methylsulfanyl)-alpha-D-ribose 1-phosphate = 5-(methylsulfanyl)-D-ribulose 1-phosphate. Its pathway is amino-acid biosynthesis; L-methionine biosynthesis via salvage pathway; L-methionine from S-methyl-5-thio-alpha-D-ribose 1-phosphate: step 1/6. In terms of biological role, catalyzes the interconversion of methylthioribose-1-phosphate (MTR-1-P) into methylthioribulose-1-phosphate (MTRu-1-P). The chain is Methylthioribose-1-phosphate isomerase from Geotalea daltonii (strain DSM 22248 / JCM 15807 / FRC-32) (Geobacter daltonii).